Here is a 199-residue protein sequence, read N- to C-terminus: Adenylyl-sulfate kinase (199 aa).

34–41 (GLSGSGKS) is a binding site for ATP. Ser108 (phosphoserine intermediate) is an active-site residue.

This sequence belongs to the APS kinase family.

It carries out the reaction adenosine 5'-phosphosulfate + ATP = 3'-phosphoadenylyl sulfate + ADP + H(+). The protein operates within sulfur metabolism; hydrogen sulfide biosynthesis; sulfite from sulfate: step 2/3. In terms of biological role, catalyzes the synthesis of activated sulfate. The polypeptide is Adenylyl-sulfate kinase (Oceanobacillus iheyensis (strain DSM 14371 / CIP 107618 / JCM 11309 / KCTC 3954 / HTE831)).